Consider the following 1087-residue polypeptide: Platelet-derived growth factor receptor alpha (1087 aa).

The first 23 residues, 1-23 (MGTPPRTFLILGCFLTGPLLTLC), serve as a signal peptide directing secretion. Residues 24 to 528 (QLPLPTIVPN…PTLRSELTVA (505 aa)) are Extracellular-facing. Ig-like C2-type domains follow at residues 26–104 (PLPT…YNHT), 116–208 (IYIY…IYIL), 213–312 (QLPV…VHDK), 314–411 (FIHL…SLLI), and 414–517 (PALI…LKLV). 4 N-linked (GlcNAc...) asparagine glycosylation sites follow: Asn-44, Asn-75, Asn-88, and Asn-102. A disulfide bond links Cys-49 and Cys-99. Intrachain disulfides connect Cys-149/Cys-189 and Cys-235/Cys-290. N-linked (GlcNAc...) asparagine glycans are attached at residues Asn-353, Asn-359, Asn-458, and Asn-468. A disulfide bridge links Cys-435 with Cys-501. The helical transmembrane segment at 529 to 549 (AAVLVLLVIVIISLIVLVIIW) threads the bilayer. Topologically, residues 550-1087 (KQKPRYEIRW…SSDLVEDSFL (538 aa)) are cytoplasmic. Phosphotyrosine; by autocatalysis is present on residues Tyr-572 and Tyr-574. One can recognise a Protein kinase domain in the interval 593–954 (LVLGRILGSG…HLSEIVESLL (362 aa)). ATP-binding positions include 599–607 (LGSGAFGKV) and Lys-627. Residues Tyr-720, Tyr-731, Tyr-742, Tyr-754, Tyr-762, and Tyr-768 each carry the phosphotyrosine; by autocatalysis modification. Asp-818 acts as the Proton acceptor in catalysis. Phosphotyrosine; by autocatalysis occurs at positions 849 and 988. Residues 1000-1011 (KDRESGFDEQRL) show a composition bias toward basic and acidic residues. The disordered stretch occupies residues 1000–1059 (KDRESGFDEQRLSADSGYITPLPDIDPVSEDELGKRNRHSSQTSEESAIETGSSSSTFIK). A Phosphotyrosine; by autocatalysis modification is found at Tyr-1017. The segment covering 1039–1057 (SSQTSEESAIETGSSSSTF) has biased composition (polar residues).

It belongs to the protein kinase superfamily. Tyr protein kinase family. CSF-1/PDGF receptor subfamily. Interacts with homodimeric PDGFA, PDGFB and PDGFC, and with heterodimers formed by PDGFA and PDGFB. Monomer in the absence of bound ligand. Interaction with dimeric PDGFA, PDGFB and/or PDGFC leads to receptor dimerization, where both PDGFRA homodimers and heterodimers with PDGFRB are observed. Ubiquitinated, leading to its internalization and degradation. Post-translationally, autophosphorylated on tyrosine residues upon ligand binding. Autophosphorylation occurs in trans, i.e. one subunit of the dimeric receptor phosphorylates tyrosine residues on the other subunit.

Its subcellular location is the cell membrane. The protein localises to the cell projection. It is found in the cilium. It localises to the golgi apparatus. The enzyme catalyses L-tyrosyl-[protein] + ATP = O-phospho-L-tyrosyl-[protein] + ADP + H(+). Its activity is regulated as follows. Present in an inactive conformation in the absence of bound ligand. Binding of PDGFA and/or PDGFB leads to dimerization and activation by autophosphorylation on tyrosine residues. In terms of biological role, tyrosine-protein kinase that acts as a cell-surface receptor for PDGFA, PDGFB and PDGFC and plays an essential role in the regulation of embryonic development, cell proliferation, survival and chemotaxis. Depending on the context, promotes or inhibits cell proliferation and cell migration. Plays an important role in the differentiation of bone marrow-derived mesenchymal stem cells. Required for normal skeleton development. Required for normal development of the gastrointestinal tract. Plays a role in cell migration and chemotaxis in wound healing. Plays a role in platelet activation, secretion of agonists from platelet granules, and in thrombin-induced platelet aggregation. Binding of its cognate ligands - homodimeric PDGFA, homodimeric PDGFB, heterodimers formed by PDGFA and PDGFB or homodimeric PDGFC -leads to the activation of several signaling cascades; the response depends on the nature of the bound ligand and is modulated by the formation of heterodimers between PDGFRA and PDGFRB. Phosphorylates PIK3R1, PLCG1, and PTPN11. Activation of PLCG1 leads to the production of the cellular signaling molecules diacylglycerol and inositol 1,4,5-trisphosphate, mobilization of cytosolic Ca(2+) and the activation of protein kinase C. Phosphorylates PIK3R1, the regulatory subunit of phosphatidylinositol 3-kinase, and thereby mediates activation of the AKT1 signaling pathway. Mediates activation of HRAS and of the MAP kinases MAPK1/ERK2 and/or MAPK3/ERK1. Promotes activation of STAT family members STAT1, STAT3 and STAT5A and/or STAT5B. Receptor signaling is down-regulated by protein phosphatases that dephosphorylate the receptor and its down-stream effectors, and by rapid internalization of the activated receptor. In Gallus gallus (Chicken), this protein is Platelet-derived growth factor receptor alpha (PDGFRA).